Reading from the N-terminus, the 182-residue chain is Bifunctional protein PyrR (182 aa).

The PRPP-binding signature appears at 99 to 111 (VILVDDVLYTGRT).

It belongs to the purine/pyrimidine phosphoribosyltransferase family. PyrR subfamily. Homodimer and homohexamer; in equilibrium.

It catalyses the reaction UMP + diphosphate = 5-phospho-alpha-D-ribose 1-diphosphate + uracil. Functionally, regulates transcriptional attenuation of the pyrimidine nucleotide (pyr) operon by binding in a uridine-dependent manner to specific sites on pyr mRNA. This disrupts an antiterminator hairpin in the RNA and favors formation of a downstream transcription terminator, leading to a reduced expression of downstream genes. Also displays a weak uracil phosphoribosyltransferase activity which is not physiologically significant. This Alkaliphilus metalliredigens (strain QYMF) protein is Bifunctional protein PyrR.